A 200-amino-acid polypeptide reads, in one-letter code: GTP cyclohydrolase 1 (200 aa).

C87, H90, and C158 together coordinate Zn(2+).

This sequence belongs to the GTP cyclohydrolase I family. As to quaternary structure, toroid-shaped homodecamer, composed of two pentamers of five dimers.

The catalysed reaction is GTP + H2O = 7,8-dihydroneopterin 3'-triphosphate + formate + H(+). Its pathway is cofactor biosynthesis; 7,8-dihydroneopterin triphosphate biosynthesis; 7,8-dihydroneopterin triphosphate from GTP: step 1/1. This Xanthomonas campestris pv. campestris (strain ATCC 33913 / DSM 3586 / NCPPB 528 / LMG 568 / P 25) protein is GTP cyclohydrolase 1.